We begin with the raw amino-acid sequence, 943 residues long: Isoleucine--tRNA ligase (943 aa).

Positions 59 to 69 (PYANGRIHLGH) match the 'HIGH' region motif. Glu577 contacts L-isoleucyl-5'-AMP. The 'KMSKS' region motif lies at 618–622 (KMSKS). An ATP-binding site is contributed by Lys621. Zn(2+)-binding residues include Cys906, Cys909, Cys926, and Cys929.

The protein belongs to the class-I aminoacyl-tRNA synthetase family. IleS type 1 subfamily. As to quaternary structure, monomer. Requires Zn(2+) as cofactor.

Its subcellular location is the cytoplasm. The enzyme catalyses tRNA(Ile) + L-isoleucine + ATP = L-isoleucyl-tRNA(Ile) + AMP + diphosphate. Functionally, catalyzes the attachment of isoleucine to tRNA(Ile). As IleRS can inadvertently accommodate and process structurally similar amino acids such as valine, to avoid such errors it has two additional distinct tRNA(Ile)-dependent editing activities. One activity is designated as 'pretransfer' editing and involves the hydrolysis of activated Val-AMP. The other activity is designated 'posttransfer' editing and involves deacylation of mischarged Val-tRNA(Ile). The protein is Isoleucine--tRNA ligase of Stenotrophomonas maltophilia (strain R551-3).